The chain runs to 371 residues: 4-hydroxy-3-methylbut-2-en-1-yl diphosphate synthase (flavodoxin) (371 aa).

[4Fe-4S] cluster-binding residues include C270, C273, C305, and E312.

It belongs to the IspG family. The cofactor is [4Fe-4S] cluster.

It carries out the reaction (2E)-4-hydroxy-3-methylbut-2-enyl diphosphate + oxidized [flavodoxin] + H2O + 2 H(+) = 2-C-methyl-D-erythritol 2,4-cyclic diphosphate + reduced [flavodoxin]. It participates in isoprenoid biosynthesis; isopentenyl diphosphate biosynthesis via DXP pathway; isopentenyl diphosphate from 1-deoxy-D-xylulose 5-phosphate: step 5/6. Converts 2C-methyl-D-erythritol 2,4-cyclodiphosphate (ME-2,4cPP) into 1-hydroxy-2-methyl-2-(E)-butenyl 4-diphosphate. This Shewanella sp. (strain ANA-3) protein is 4-hydroxy-3-methylbut-2-en-1-yl diphosphate synthase (flavodoxin).